The sequence spans 94 residues: Large ribosomal subunit protein bL25 (94 aa).

Belongs to the bacterial ribosomal protein bL25 family. As to quaternary structure, part of the 50S ribosomal subunit; part of the 5S rRNA/L5/L18/L25 subcomplex. Contacts the 5S rRNA. Binds to the 5S rRNA independently of L5 and L18.

Its function is as follows. This is one of the proteins that binds to the 5S RNA in the ribosome where it forms part of the central protuberance. The polypeptide is Large ribosomal subunit protein bL25 (Sodalis glossinidius (strain morsitans)).